The sequence spans 229 residues: MNKYFKVFFFVLLTHALKSSLIFGQATLQKGLSLDIDKDSTATDRLVVKHLDSDKQGYKVYTFKKEGWEYVNVKHVYFGERLLRVGRDNDMRCDFVHYVKVFWKGDVAPFFIKMNYYNWAWVSTRLHFKLNPDLTWTEVTVLTLDENAEQGFTTLFKQKLDEFASQVGDDVLAKYKPFVDDPNKKRFDLKATDEKEETSKKKYVLMVVVVVVFVVVASLVVFLVKFCLK.

The signal sequence occupies residues 1-19; the sequence is MNKYFKVFFFVLLTHALKS. Over 20–203 the chain is Extracellular; sequence SLIFGQATLQ…EKEETSKKKY (184 aa). A helical membrane pass occupies residues 204 to 224; sequence VLMVVVVVVFVVVASLVVFLV. Topologically, residues 225–229 are cytoplasmic; that stretch reads KFCLK.

The protein localises to the membrane. The sequence is that of 23 kDa piroplasm membrane protein from Theileria annulata.